The primary structure comprises 386 residues: 5-amino-6-(D-ribitylamino)uracil--L-tyrosine 4-hydroxyphenyl transferase (386 aa).

In terms of domain architecture, Radical SAM core spans 56 to 303; it reads VSYVINRNLN…MAVARLYLGD (248 aa). [4Fe-4S] cluster is bound by residues C70, C74, and C77.

It belongs to the radical SAM superfamily. CofH family. As to quaternary structure, consists of two subunits, CofG and CofH. [4Fe-4S] cluster serves as cofactor.

The enzyme catalyses 5-amino-6-(D-ribitylamino)uracil + L-tyrosine + S-adenosyl-L-methionine = 5-amino-5-(4-hydroxybenzyl)-6-(D-ribitylimino)-5,6-dihydrouracil + 2-iminoacetate + 5'-deoxyadenosine + L-methionine + H(+). Its pathway is cofactor biosynthesis; coenzyme F0 biosynthesis. Its function is as follows. Catalyzes the radical-mediated synthesis of 5-amino-5-(4-hydroxybenzyl)-6-(D-ribitylimino)-5,6-dihydrouracil from 5-amino-6-(D-ribitylamino)uracil and L-tyrosine. The protein is 5-amino-6-(D-ribitylamino)uracil--L-tyrosine 4-hydroxyphenyl transferase of Synechococcus elongatus (strain ATCC 33912 / PCC 7942 / FACHB-805) (Anacystis nidulans R2).